A 249-amino-acid polypeptide reads, in one-letter code: 1-(5-phosphoribosyl)-5-[(5-phosphoribosylamino)methylideneamino] imidazole-4-carboxamide isomerase (249 aa).

D11 (proton acceptor) is an active-site residue. D132 functions as the Proton donor in the catalytic mechanism.

The protein belongs to the HisA/HisF family.

It is found in the cytoplasm. The catalysed reaction is 1-(5-phospho-beta-D-ribosyl)-5-[(5-phospho-beta-D-ribosylamino)methylideneamino]imidazole-4-carboxamide = 5-[(5-phospho-1-deoxy-D-ribulos-1-ylimino)methylamino]-1-(5-phospho-beta-D-ribosyl)imidazole-4-carboxamide. It participates in amino-acid biosynthesis; L-histidine biosynthesis; L-histidine from 5-phospho-alpha-D-ribose 1-diphosphate: step 4/9. The protein is 1-(5-phosphoribosyl)-5-[(5-phosphoribosylamino)methylideneamino] imidazole-4-carboxamide isomerase of Nitrobacter winogradskyi (strain ATCC 25391 / DSM 10237 / CIP 104748 / NCIMB 11846 / Nb-255).